Consider the following 129-residue polypeptide: Sulfurtransferase TusD (129 aa).

Cys-79 (cysteine persulfide intermediate) is an active-site residue.

Belongs to the DsrE/TusD family. Heterohexamer, formed by a dimer of trimers. The hexameric TusBCD complex contains 2 copies each of TusB, TusC and TusD. The TusBCD complex interacts with TusE.

It localises to the cytoplasm. Its function is as follows. Part of a sulfur-relay system required for 2-thiolation of 5-methylaminomethyl-2-thiouridine (mnm(5)s(2)U) at tRNA wobble positions. Accepts sulfur from TusA and transfers it in turn to TusE. The chain is Sulfurtransferase TusD from Pectobacterium carotovorum subsp. carotovorum (strain PC1).